A 433-amino-acid polypeptide reads, in one-letter code: 3-phosphoshikimate 1-carboxyvinyltransferase (433 aa).

Lys-23, Ser-24, and Arg-28 together coordinate 3-phosphoshikimate. Lys-23 serves as a coordination point for phosphoenolpyruvate. Positions 95 and 123 each coordinate phosphoenolpyruvate. Residues Ser-170, Ser-171, Gln-172, Ser-198, Asp-317, and Lys-344 each coordinate 3-phosphoshikimate. Gln-172 provides a ligand contact to phosphoenolpyruvate. Asp-317 acts as the Proton acceptor in catalysis. Residues Arg-348, Arg-391, and Lys-416 each contribute to the phosphoenolpyruvate site.

Belongs to the EPSP synthase family. Monomer.

The protein resides in the cytoplasm. It carries out the reaction 3-phosphoshikimate + phosphoenolpyruvate = 5-O-(1-carboxyvinyl)-3-phosphoshikimate + phosphate. It participates in metabolic intermediate biosynthesis; chorismate biosynthesis; chorismate from D-erythrose 4-phosphate and phosphoenolpyruvate: step 6/7. Its function is as follows. Catalyzes the transfer of the enolpyruvyl moiety of phosphoenolpyruvate (PEP) to the 5-hydroxyl of shikimate-3-phosphate (S3P) to produce enolpyruvyl shikimate-3-phosphate and inorganic phosphate. The chain is 3-phosphoshikimate 1-carboxyvinyltransferase from Neisseria meningitidis serogroup C / serotype 2a (strain ATCC 700532 / DSM 15464 / FAM18).